We begin with the raw amino-acid sequence, 902 residues long: Nuclear factor of activated T-cells, cytoplasmic 4 (902 aa).

Disordered regions lie at residues 16–180 and 208–369; these read VFGE…SSWS and RFGL…GGSR. Residues 50–81 are compositionally biased toward pro residues; that stretch reads EPPPYGAAPIGIPRPPPPRPGMHSPPPRPAPS. Gly residues predominate over residues 96-109; that stretch reads GGPGGGAGGAGGGR. Residues 114–119 are calcineurin-binding; it reads PSIRIT. The span at 151 to 165 shows a compositional bias: gly residues; it reads GFGGYREAGGQGGGA. The segment covering 166–180 has biased composition (low complexity); the sequence is FFSPSPGSSSLSSWS. Residues Ser168 and Ser170 each carry the phosphoserine; by MAPK7 and MAPK14 modification. Residues Ser213 and Ser217 each carry the phosphoserine; by MAPK8 and MAPK9 modification. Residues 213–229 form an SP 1 repeat; sequence SPLPSPRASPRPWTPED. The interval 213–293 is 2 approximate SP repeats; it reads SPLPSPRASP…LSRRGSLGEE (81 aa). Composition is skewed to pro residues over residues 215 to 227 and 254 to 263; these read LPSPRASPRPWTP and GPTPASPRPA. The short motif at 268–270 is the Nuclear localization signal element; the sequence is KRR. A compositionally biased stretch (low complexity) spans 272-288; it reads SSSGTPSSASPALSRRG. An SP 2; approximate repeat occupies 277 to 293; sequence PSSASPALSRRGSLGEE. Residues Ser289 and Ser344 each carry the phosphoserine; by RPS6KA3 modification. In terms of domain architecture, RHD spans 401-582; it reads SALPPLDWPL…VPIECSQRSA (182 aa). The DNA-binding element occupies 430-437; it reads RAHYETEG. One can recognise an IPT/TIG domain in the interval 586–683; the sequence is PQVEAYSPSA…KRSPTQSFRF (98 aa). Positions 672–674 match the Nuclear localization signal motif; that stretch reads RRK. Lys689 is covalently cross-linked (Glycyl lysine isopeptide (Lys-Gly) (interchain with G-Cter in SUMO2)). Positions 791 to 870 are disordered; it reads PYGGRGSSFS…GGYSSGFRDS (80 aa). A compositionally biased stretch (pro residues) spans 805–824; that stretch reads FSPPAPFRPPPLPASPPLEG.

Member of the multicomponent NFATC transcription complex that consists of at least two components, a pre-existing cytoplasmic component NFATC2 and an inducible nuclear component NFATC1. Other NFAT proteins, such as NFATC3, or members of the activating protein-1 (AP-1) family and MAF can also bind the complex. NFAT proteins can bind DNA as monomers or dimers. Component of a promoter-binding complex composed of STAT3, NFATC3 and NFATC4; complex formation is enhanced by calcineurin. Interacts with CREBBP; this interaction potentiates transcription activation. Interacts with MAPK8/JNK1 and MAPK9/JNK2. Interacts with GATA4 (via the second Zn finger). Interacts (via N-terminus) with IRAK1 (via C-terminus). Interacts with RPS6KA3. Interacts with HOMER1, HOMER2 and HOMER3; this interaction competes with calcineurin/PPP3CA-binding and hence prevents NFATC4 dephosphorylation and activation. Interacts with ESR1 and ESR2; this interaction decreases NFATC4 transcriptional activity. Interacts with MTOR and MAPK7/ERK5. Interacts with TRIM17; this interaction prevents NFATC3 nuclear localization. Interacts with TCF25 (via C-terminus); the interaction leads to suppression of NFATC4 transcription factor activity and is reduced following stimulation with angiotensin-2. Phosphorylated by NFATC-kinases; dephosphorylated by calcineurin/PPP3CA. Phosphorylated on Ser-168 and Ser-170 by MTOR, IRAK1, MAPK7/ERK5 and MAPK14/p38, on Ser-213 and Ser-217 by MAPK8/JNK1 and MAPK9/JNK2, and on Ser-289 and Ser-344 by RPS6KA3. Phosphorylated by GSK3B. Phosphorylation by GSK3B markedly increases NFATC4 ubiquitination. Phosphorylation at Ser-168 and Ser-170 is stimulated by UV irradiation. Phosphorylation determines subcellular location: the hyperphosphorylated protein is cytosolic, while the dephosphorylated form is targeted to the nucleus. In terms of processing, ubiquitinated, leading to degradation by the proteasome. Ubiquitination may be stimulated by GSK3B-dependent phosphorylation. Polyubiquitin linkage mainly occurs through 'Lys-48'. As to expression, widely expressed, with high levels in placenta, lung, kidney, testis and ovary. Weakly expressed in spleen and thymus. In the hippocampus, expressed in the granular layer of the dentate gyrus, in the pyramidal neurons of CA3 region, and in the hippocampal fissure. Expressed in the heart (at protein level).

It is found in the cytoplasm. Its subcellular location is the nucleus. Transcriptional activity may be repressed by ESR1 and ESR2. Ca(2+)-regulated transcription factor that is involved in several processes, including the development and function of the immune, cardiovascular, musculoskeletal, and nervous systems. Involved in T-cell activation, stimulating the transcription of cytokine genes, including that of IL2 and IL4. Along with NFATC3, involved in embryonic heart development. Following JAK/STAT signaling activation and as part of a complex with NFATC3 and STAT3, binds to the alpha-beta E4 promoter region of CRYAB and activates transcription in cardiomyocytes. Involved in mitochondrial energy metabolism required for cardiac morphogenesis and function. Transactivates many genes involved in the cardiovascular system, including AGTR2, NPPB/BNP (in synergy with GATA4), NPPA/ANP/ANF and MYH7/beta-MHC. Involved in the regulation of adult hippocampal neurogenesis. Involved in BDNF-driven pro-survival signaling in hippocampal adult-born neurons. Involved in the formation of long-term spatial memory and long-term potentiation. In cochlear nucleus neurons, may play a role in deafferentation-induced apoptosis during the developmental critical period, when auditory neurons depend on afferent input for survival. Binds to and activates the BACE1/Beta-secretase 1 promoter, hence may regulate the proteolytic processing of the amyloid precursor protein (APP). Plays a role in adipocyte differentiation. May be involved in myoblast differentiation into myotubes. Binds the consensus DNA sequence 5'-GGAAAAT-3'. In the presence of CREBBP, activates TNF transcription. Binds to PPARG gene promoter and regulates its activity. Binds to PPARG and REG3G gene promoters. The sequence is that of Nuclear factor of activated T-cells, cytoplasmic 4 (NFATC4) from Homo sapiens (Human).